The chain runs to 227 residues: Cytidylate kinase (227 aa).

Position 12 to 20 (Gly12 to Thr20) interacts with ATP.

This sequence belongs to the cytidylate kinase family. Type 1 subfamily.

It localises to the cytoplasm. The catalysed reaction is CMP + ATP = CDP + ADP. The enzyme catalyses dCMP + ATP = dCDP + ADP. The protein is Cytidylate kinase of Xanthomonas axonopodis pv. citri (strain 306).